The chain runs to 256 residues: Pro-thyrotropin-releasing hormone (256 aa).

Residues 1–24 (MQGPWLMMALALIFVLTGIPKSCA) form the signal peptide. Disordered stretches follow at residues 76 to 128 (RQHP…EGDS) and 151 to 215 (VKRQ…HPCG). Proline amide occurs at positions 79, 111, 156, and 174. Over residues 104-113 (RPHKRQHPGR) the composition is skewed to basic residues. Basic and acidic residues predominate over residues 177–188 (RFIDPELQRSWE). Proline amide is present on Pro-205.

This sequence belongs to the TRH family. As to expression, specifically expressed in hypothalamus and testis.

The protein resides in the secreted. Its function is as follows. Functions as a regulator of the biosynthesis of TSH in the anterior pituitary gland and as a neurotransmitter/ neuromodulator in the central and peripheral nervous systems. The sequence is that of Pro-thyrotropin-releasing hormone (Trh) from Mus musculus (Mouse).